Reading from the N-terminus, the 79-residue chain is D-alanyl carrier protein (79 aa).

The 77-residue stretch at 1 to 77 (MDTKQAVLDI…KIIAKVESLR (77 aa)) folds into the Carrier domain. S35 carries the O-(pantetheine 4'-phosphoryl)serine modification.

Belongs to the DltC family. 4'-phosphopantetheine is transferred from CoA to a specific serine of apo-DCP.

Its subcellular location is the cytoplasm. It participates in cell wall biogenesis; lipoteichoic acid biosynthesis. Functionally, carrier protein involved in the D-alanylation of lipoteichoic acid (LTA). The loading of thioester-linked D-alanine onto DltC is catalyzed by D-alanine--D-alanyl carrier protein ligase DltA. The DltC-carried D-alanyl group is further transferred to cell membrane phosphatidylglycerol (PG) by forming an ester bond, probably catalyzed by DltD. D-alanylation of LTA plays an important role in modulating the properties of the cell wall in Gram-positive bacteria, influencing the net charge of the cell wall. This is D-alanyl carrier protein from Lactobacillus gasseri (strain ATCC 33323 / DSM 20243 / BCRC 14619 / CIP 102991 / JCM 1131 / KCTC 3163 / NCIMB 11718 / NCTC 13722 / AM63).